The sequence spans 688 residues: Putative proline--tRNA ligase YHR020W (688 aa).

At S149 the chain carries Phosphoserine. A Phosphothreonine modification is found at T170. The interval E631 to S650 is disordered. Phosphoserine is present on S655.

The protein belongs to the class-II aminoacyl-tRNA synthetase family.

The catalysed reaction is tRNA(Pro) + L-proline + ATP = L-prolyl-tRNA(Pro) + AMP + diphosphate. This is Putative proline--tRNA ligase YHR020W from Saccharomyces cerevisiae (strain ATCC 204508 / S288c) (Baker's yeast).